The following is a 284-amino-acid chain: Elongation factor Ts (284 aa).

An involved in Mg(2+) ion dislocation from EF-Tu region spans residues threonine 80 to valine 83.

Belongs to the EF-Ts family.

It localises to the cytoplasm. Its function is as follows. Associates with the EF-Tu.GDP complex and induces the exchange of GDP to GTP. It remains bound to the aminoacyl-tRNA.EF-Tu.GTP complex up to the GTP hydrolysis stage on the ribosome. This chain is Elongation factor Ts, found in Neisseria meningitidis serogroup A / serotype 4A (strain DSM 15465 / Z2491).